Here is a 272-residue protein sequence, read N- to C-terminus: MNMKKEIIVYSISDSLGGTSQKLLSAVTAQYPDIIFNNSYRFPFINKEEELLAILRDAIKDDALVISTLVDSKLAAVAREFSQANGLAYLDLMHPFFEIIREKTGTSPIEVPGTLHRLDTEYFNKISAIEFAVKYDDGKAPQGFLDSDLVLLGVSRTSKTPLSIYLANKGYKVSNLPLIPEVPLPQVLEKVDPERIIGLLCEPEKLSKIRSNRLNSLGLTQSTSYTDLEKIYEELDYSKEVFKKYRAHVINITDKSIEETAFLIEDHLKKLR.

153–160 (GVSRTSKT) lines the ADP pocket.

The protein belongs to the pyruvate, phosphate/water dikinase regulatory protein family. PDRP subfamily.

The enzyme catalyses N(tele)-phospho-L-histidyl/L-threonyl-[pyruvate, phosphate dikinase] + ADP = N(tele)-phospho-L-histidyl/O-phospho-L-threonyl-[pyruvate, phosphate dikinase] + AMP + H(+). The catalysed reaction is N(tele)-phospho-L-histidyl/O-phospho-L-threonyl-[pyruvate, phosphate dikinase] + phosphate + H(+) = N(tele)-phospho-L-histidyl/L-threonyl-[pyruvate, phosphate dikinase] + diphosphate. Bifunctional serine/threonine kinase and phosphorylase involved in the regulation of the pyruvate, phosphate dikinase (PPDK) by catalyzing its phosphorylation/dephosphorylation. This chain is Putative pyruvate, phosphate dikinase regulatory protein, found in Streptococcus sanguinis (strain SK36).